A 238-amino-acid chain; its full sequence is Uridylate kinase (238 aa).

Residue 12-15 (KLSG) coordinates ATP. Gly54 lines the UMP pocket. ATP contacts are provided by Gly55 and Arg59. Residues Asp74 and 135–142 (TGNPYFTT) contribute to the UMP site. Positions 162, 168, and 171 each coordinate ATP.

This sequence belongs to the UMP kinase family. Homohexamer.

Its subcellular location is the cytoplasm. The enzyme catalyses UMP + ATP = UDP + ADP. The protein operates within pyrimidine metabolism; CTP biosynthesis via de novo pathway; UDP from UMP (UMPK route): step 1/1. Inhibited by UTP. Catalyzes the reversible phosphorylation of UMP to UDP. The polypeptide is Uridylate kinase (Lawsonia intracellularis (strain PHE/MN1-00)).